We begin with the raw amino-acid sequence, 553 residues long: Terpene synthase 16 (553 aa).

Positions 303, 307, and 457 each coordinate Mg(2+). The short motif at 303-307 (DDTYD) is the DDXXD motif element.

The protein belongs to the terpene synthase family. Tpsa subfamily. Requires Mg(2+) as cofactor. The cofactor is Mn(2+). In terms of tissue distribution, expressed in leaves, trichomes and flowers.

Its pathway is secondary metabolite biosynthesis; terpenoid biosynthesis. Its function is as follows. Sesquiterpene synthase involved in the biosynthesis of volatile compounds. No activity detected with geranyl diphosphate (GPP) and farnesyl diphosphate (FPP) as substrates. This Solanum lycopersicum (Tomato) protein is Terpene synthase 16.